A 451-amino-acid polypeptide reads, in one-letter code: uncharacterized protein (451 aa).

The TRAM domain occupies 2–60 (VVKVKQKIPLKIKRMGINGEGIGFYQKTLVFVPGALKGEDIFCQITAVKRNFAEAKLLT). [4Fe-4S] cluster is bound by residues Cys-73, Cys-79, Cys-82, and Cys-162. Positions 283, 312, 333, and 381 each coordinate S-adenosyl-L-methionine. Cys-408 functions as the Nucleophile in the catalytic mechanism.

This sequence belongs to the class I-like SAM-binding methyltransferase superfamily. RNA M5U methyltransferase family.

This is an uncharacterized protein from Streptococcus pyogenes serotype M1.